We begin with the raw amino-acid sequence, 404 residues long: MHC class I-like protein MILL1 (404 aa).

A signal peptide spans 1-30; that stretch reads MMLSRDLRAEAAVRLWIMFLLLEDLLGACA. Residues 59–150 form an alpha-1 region; the sequence is EVAGPHTLRY…VTGQKGQDKG (92 aa). 3 N-linked (GlcNAc...) asparagine glycosylation sites follow: Asn-98, Asn-102, and Asn-165. Positions 151–242 are alpha-2; that stretch reads LHILQATLGC…SLRSEPLDTG (92 aa). 2 cysteine pairs are disulfide-bonded: Cys-160–Cys-223 and Cys-262–Cys-322. The Ig-like C1-type domain occupies 224–338; the sequence is PAQLQRHLAS…GNIEKRAVIV (115 aa). The segment at 243–342 is alpha-3; sequence SPMVIVTFRN…KRAVIVNTVS (100 aa). Asn-323 carries an N-linked (GlcNAc...) asparagine glycan. The tract at residues 343–373 is connecting peptide; the sequence is GEKTRQPSTSGVGGRVKKSLWTTMTTAFMVT. The GPI-anchor amidated serine moiety is linked to residue Ser-374. A propeptide spans 375 to 404 (removed in mature form); the sequence is WTRKTGGDSTLLLLWWLLFFSTVLAVLTLV.

It belongs to the MHC class I family. Heterodimer with B2M. Detected in skin, esophagus, tongue, skin, muscle, uterus, ovary, testis and epididymis.

The protein localises to the cell membrane. The chain is MHC class I-like protein MILL1 from Rattus norvegicus (Rat).